A 327-amino-acid polypeptide reads, in one-letter code: L-lactate dehydrogenase (327 aa).

Residues valine 18, aspartate 39, lysine 44, tyrosine 69, and 83–84 (GA) each bind NAD(+). Residues glutamine 86, arginine 92, and 124-127 (NPVD) each bind substrate. NAD(+) is bound by residues 122–124 (AAN) and serine 147. Residue 152 to 155 (DSAR) participates in substrate binding. Arginine 157 and histidine 172 together coordinate beta-D-fructose 1,6-bisphosphate. The Proton acceptor role is filled by histidine 179. Tyrosine 224 is subject to Phosphotyrosine. Threonine 233 contributes to the substrate binding site.

It belongs to the LDH/MDH superfamily. LDH family. In terms of assembly, homotetramer.

It localises to the cytoplasm. It carries out the reaction (S)-lactate + NAD(+) = pyruvate + NADH + H(+). Its pathway is fermentation; pyruvate fermentation to lactate; (S)-lactate from pyruvate: step 1/1. Its activity is regulated as follows. Allosterically activated by fructose 1,6-bisphosphate (FBP). Catalyzes the conversion of lactate to pyruvate. The sequence is that of L-lactate dehydrogenase from Streptococcus pyogenes serotype M3 (strain SSI-1).